The primary structure comprises 329 residues: 4-hydroxythreonine-4-phosphate dehydrogenase (329 aa).

His136 and Thr137 together coordinate substrate. Residues His166, His211, and His266 each contribute to the a divalent metal cation site. Lys274, Asn283, and Arg292 together coordinate substrate.

Belongs to the PdxA family. Homodimer. It depends on Zn(2+) as a cofactor. Mg(2+) is required as a cofactor. The cofactor is Co(2+).

Its subcellular location is the cytoplasm. The catalysed reaction is 4-(phosphooxy)-L-threonine + NAD(+) = 3-amino-2-oxopropyl phosphate + CO2 + NADH. It functions in the pathway cofactor biosynthesis; pyridoxine 5'-phosphate biosynthesis; pyridoxine 5'-phosphate from D-erythrose 4-phosphate: step 4/5. Functionally, catalyzes the NAD(P)-dependent oxidation of 4-(phosphooxy)-L-threonine (HTP) into 2-amino-3-oxo-4-(phosphooxy)butyric acid which spontaneously decarboxylates to form 3-amino-2-oxopropyl phosphate (AHAP). The chain is 4-hydroxythreonine-4-phosphate dehydrogenase from Salmonella typhimurium (strain LT2 / SGSC1412 / ATCC 700720).